Consider the following 141-residue polypeptide: ATP synthase epsilon chain (141 aa).

Belongs to the ATPase epsilon chain family. In terms of assembly, F-type ATPases have 2 components, CF(1) - the catalytic core - and CF(0) - the membrane proton channel. CF(1) has five subunits: alpha(3), beta(3), gamma(1), delta(1), epsilon(1). CF(0) has three main subunits: a, b and c.

Its subcellular location is the cell inner membrane. In terms of biological role, produces ATP from ADP in the presence of a proton gradient across the membrane. The sequence is that of ATP synthase epsilon chain from Chromohalobacter salexigens (strain ATCC BAA-138 / DSM 3043 / CIP 106854 / NCIMB 13768 / 1H11).